The primary structure comprises 119 residues: Toxin ICK-11 (119 aa).

A signal peptide spans 1 to 19 (MMKLYSLVIIATLAAAAFA). 4 disulfides stabilise this stretch: Cys59/Cys74, Cys67/Cys80, Cys71/Cys116, and Cys73/Cys87.

It belongs to the neurotoxin 25 family. ICK-8 subfamily. As to expression, expressed by the venom gland.

The protein resides in the secreted. In terms of biological role, ion channel inhibitor. This is Toxin ICK-11 from Trittame loki (Brush-footed trapdoor spider).